Reading from the N-terminus, the 668-residue chain is DNA ligase (668 aa).

NAD(+)-binding positions include 32-36, 81-82, and E110; these read DSEYD and SL. Catalysis depends on K112, which acts as the N6-AMP-lysine intermediate. R133, E167, K283, and K307 together coordinate NAD(+). 4 residues coordinate Zn(2+): C401, C404, C419, and C424. One can recognise a BRCT domain in the interval 586–668; that stretch reads QTDSEFNGKT…IQKQKEVENK (83 aa).

It belongs to the NAD-dependent DNA ligase family. LigA subfamily. Requires Mg(2+) as cofactor. Mn(2+) is required as a cofactor.

The catalysed reaction is NAD(+) + (deoxyribonucleotide)n-3'-hydroxyl + 5'-phospho-(deoxyribonucleotide)m = (deoxyribonucleotide)n+m + AMP + beta-nicotinamide D-nucleotide.. In terms of biological role, DNA ligase that catalyzes the formation of phosphodiester linkages between 5'-phosphoryl and 3'-hydroxyl groups in double-stranded DNA using NAD as a coenzyme and as the energy source for the reaction. It is essential for DNA replication and repair of damaged DNA. This chain is DNA ligase, found in Staphylococcus carnosus (strain TM300).